A 159-amino-acid chain; its full sequence is Phosphopantetheine adenylyltransferase (159 aa).

Residue threonine 10 participates in substrate binding. Residues 10-11 (TF) and histidine 18 each bind ATP. Substrate contacts are provided by lysine 42, methionine 74, and arginine 88. ATP is bound by residues 89-91 (GLR), glutamate 99, and 124-130 (WSFISSS).

Belongs to the bacterial CoaD family. Homohexamer. Mg(2+) is required as a cofactor.

The protein resides in the cytoplasm. It carries out the reaction (R)-4'-phosphopantetheine + ATP + H(+) = 3'-dephospho-CoA + diphosphate. Its pathway is cofactor biosynthesis; coenzyme A biosynthesis; CoA from (R)-pantothenate: step 4/5. Functionally, reversibly transfers an adenylyl group from ATP to 4'-phosphopantetheine, yielding dephospho-CoA (dPCoA) and pyrophosphate. The polypeptide is Phosphopantetheine adenylyltransferase (Yersinia enterocolitica serotype O:8 / biotype 1B (strain NCTC 13174 / 8081)).